Consider the following 435-residue polypeptide: 3-phosphoshikimate 1-carboxyvinyltransferase (435 aa).

The 3-phosphoshikimate site is built by lysine 23, serine 24, and arginine 28. Residue lysine 23 participates in phosphoenolpyruvate binding. Phosphoenolpyruvate-binding residues include glycine 97 and arginine 125. 3-phosphoshikimate contacts are provided by serine 170, serine 171, glutamine 172, serine 198, aspartate 315, asparagine 338, and lysine 342. Glutamine 172 serves as a coordination point for phosphoenolpyruvate. The active-site Proton acceptor is aspartate 315. Phosphoenolpyruvate contacts are provided by arginine 346, arginine 388, and lysine 413.

It belongs to the EPSP synthase family. Monomer.

Its subcellular location is the cytoplasm. The catalysed reaction is 3-phosphoshikimate + phosphoenolpyruvate = 5-O-(1-carboxyvinyl)-3-phosphoshikimate + phosphate. The protein operates within metabolic intermediate biosynthesis; chorismate biosynthesis; chorismate from D-erythrose 4-phosphate and phosphoenolpyruvate: step 6/7. Its function is as follows. Catalyzes the transfer of the enolpyruvyl moiety of phosphoenolpyruvate (PEP) to the 5-hydroxyl of shikimate-3-phosphate (S3P) to produce enolpyruvyl shikimate-3-phosphate and inorganic phosphate. This is 3-phosphoshikimate 1-carboxyvinyltransferase from Buchnera aphidicola subsp. Cinara cedri (strain Cc).